Reading from the N-terminus, the 234-residue chain is 2-C-methyl-D-erythritol 4-phosphate cytidylyltransferase (234 aa).

This sequence belongs to the IspD/TarI cytidylyltransferase family. IspD subfamily.

The catalysed reaction is 2-C-methyl-D-erythritol 4-phosphate + CTP + H(+) = 4-CDP-2-C-methyl-D-erythritol + diphosphate. It functions in the pathway isoprenoid biosynthesis; isopentenyl diphosphate biosynthesis via DXP pathway; isopentenyl diphosphate from 1-deoxy-D-xylulose 5-phosphate: step 2/6. Catalyzes the formation of 4-diphosphocytidyl-2-C-methyl-D-erythritol from CTP and 2-C-methyl-D-erythritol 4-phosphate (MEP). The sequence is that of 2-C-methyl-D-erythritol 4-phosphate cytidylyltransferase from Syntrophus aciditrophicus (strain SB).